A 344-amino-acid polypeptide reads, in one-letter code: Dihydroorotate dehydrogenase (quinone) (344 aa).

FMN is bound by residues 65–69 (AGLDK) and Thr89. Position 69 (Lys69) interacts with substrate. Position 114–118 (114–118 (NRMGF)) interacts with substrate. 2 residues coordinate FMN: Asn145 and Asn178. Residue Asn178 participates in substrate binding. Residue Ser181 is the Nucleophile of the active site. Asn183 contacts substrate. 2 residues coordinate FMN: Lys223 and Thr251. 252–253 (NT) is a substrate binding site. Residues Gly274, Gly303, and 324-325 (YS) each bind FMN.

It belongs to the dihydroorotate dehydrogenase family. Type 2 subfamily. In terms of assembly, monomer. It depends on FMN as a cofactor.

It is found in the cell membrane. The catalysed reaction is (S)-dihydroorotate + a quinone = orotate + a quinol. The protein operates within pyrimidine metabolism; UMP biosynthesis via de novo pathway; orotate from (S)-dihydroorotate (quinone route): step 1/1. In terms of biological role, catalyzes the conversion of dihydroorotate to orotate with quinone as electron acceptor. The chain is Dihydroorotate dehydrogenase (quinone) from Cupriavidus necator (strain ATCC 17699 / DSM 428 / KCTC 22496 / NCIMB 10442 / H16 / Stanier 337) (Ralstonia eutropha).